The following is a 109-amino-acid chain: Large ribosomal subunit protein uL22 (109 aa).

Basic residues predominate over residues 84–95 (ARGTASRIRKPT). The tract at residues 84–109 (ARGTASRIRKPTSHIMVEVSKPSKEA) is disordered.

Belongs to the universal ribosomal protein uL22 family. As to quaternary structure, part of the 50S ribosomal subunit.

Its function is as follows. This protein binds specifically to 23S rRNA; its binding is stimulated by other ribosomal proteins, e.g. L4, L17, and L20. It is important during the early stages of 50S assembly. It makes multiple contacts with different domains of the 23S rRNA in the assembled 50S subunit and ribosome. Functionally, the globular domain of the protein is located near the polypeptide exit tunnel on the outside of the subunit, while an extended beta-hairpin is found that lines the wall of the exit tunnel in the center of the 70S ribosome. The chain is Large ribosomal subunit protein uL22 from Campylobacter hominis (strain ATCC BAA-381 / DSM 21671 / CCUG 45161 / LMG 19568 / NCTC 13146 / CH001A).